The chain runs to 189 residues: Elongation factor P (189 aa).

It belongs to the elongation factor P family.

The protein resides in the cytoplasm. The protein operates within protein biosynthesis; polypeptide chain elongation. Involved in peptide bond synthesis. Stimulates efficient translation and peptide-bond synthesis on native or reconstituted 70S ribosomes in vitro. Probably functions indirectly by altering the affinity of the ribosome for aminoacyl-tRNA, thus increasing their reactivity as acceptors for peptidyl transferase. The chain is Elongation factor P from Pseudomonas fluorescens (strain Pf0-1).